Here is a 632-residue protein sequence, read N- to C-terminus: MLLTTPSSRGSRAQSGIANVSWLALSLLLLFSPTLGSAKSAADYYVRSLPGAPEGPLLKMHAGHIEVDAQNNGNLFFWHYQNRHIANRQRTVIWLNGGPGCSSMDGALMEIGPYRLKDNHTLEYNNGSWDEFANLLFVDQPVGTGFSYVNTNSYIHELDEMSAQFITFLEKWFQLFPEYEGDDIYIAGESYAGQHIPYIAKAIQERNNKIQNDQSIRWNLRGIVIGNGWISPAQQYPSYLTFAYEEGLVTKGSSLAKDLEVYQSVCESKISASPNAINIRDCEEILQQILARTKDTNKQCYNMYDVRLRDTYPSCGMNWPTDLVDVKPYLQRPDVVQALNINPEKKSGWEECSGAVSSTFNAANSLPSVQLLPELLESGIPILLFSGDKDLICNHVGTEQLINNMKWNGGTGFETSPGVWAPRHDWTFEGEPAGIYQYARNLTYVLFYNASHMVPYDLPRQSRDMLDRFMKVDIANIGGKPADSRIDGEKLPQTSVGGHPNSTAAEQQAKEKIKETEWKAYAKSGEAALIVVIIGVTVWGFFIWRSRRRNRGYQGVYQRDIGSGSILERFHNKRSGPADVEAGDFDESELDNLHSPGLEQEHYAVGDDSDEESPNHQPAAPPSSTKPGGAQP.

The first 38 residues, 1–38, serve as a signal peptide directing secretion; that stretch reads MLLTTPSSRGSRAQSGIANVSWLALSLLLLFSPTLGSA. At 39 to 523 the chain is on the lumenal side; the sequence is KSAADYYVRS…KETEWKAYAK (485 aa). N-linked (GlcNAc...) asparagine glycans are attached at residues Asn119 and Asn126. Active-site residues include Ser190 and Asp390. Residues Asn441 and Asn449 are each glycosylated (N-linked (GlcNAc...) asparagine). The active site involves His452. A disordered region spans residues 480–509; it reads KPADSRIDGEKLPQTSVGGHPNSTAAEQQA. The span at 492–506 shows a compositional bias: polar residues; it reads PQTSVGGHPNSTAAE. Residue Asn501 is glycosylated (N-linked (GlcNAc...) asparagine). Residues 524 to 544 traverse the membrane as a helical segment; sequence SGEAALIVVIIGVTVWGFFIW. At 545 to 632 the chain is on the cytoplasmic side; sequence RSRRRNRGYQ…SSTKPGGAQP (88 aa). The interval 574 to 632 is disordered; that stretch reads RSGPADVEAGDFDESELDNLHSPGLEQEHYAVGDDSDEESPNHQPAAPPSSTKPGGAQP. Residues 581 to 590 show a composition bias toward acidic residues; it reads EAGDFDESEL.

This sequence belongs to the peptidase S10 family.

It localises to the golgi apparatus. Its subcellular location is the trans-Golgi network membrane. It carries out the reaction Preferential release of a C-terminal arginine or lysine residue.. Functionally, protease with a carboxypeptidase B-like function involved in the C-terminal processing of the lysine and arginine residues from protein precursors. Promotes cell fusion and is involved in the programmed cell death. The chain is Pheromone-processing carboxypeptidase kex1 (kex1) from Aspergillus fumigatus (strain CBS 144.89 / FGSC A1163 / CEA10) (Neosartorya fumigata).